The sequence spans 453 residues: Pup--protein ligase (453 aa).

Glu9 is a binding site for Mg(2+). Arg53 is an ATP binding site. Tyr55 provides a ligand contact to Mg(2+). Asp57 (proton acceptor) is an active-site residue. Glu63 lines the Mg(2+) pocket. 2 residues coordinate ATP: Thr66 and Trp420.

The protein belongs to the Pup ligase/Pup deamidase family. Pup-conjugating enzyme subfamily.

The catalysed reaction is ATP + [prokaryotic ubiquitin-like protein]-L-glutamate + [protein]-L-lysine = ADP + phosphate + N(6)-([prokaryotic ubiquitin-like protein]-gamma-L-glutamyl)-[protein]-L-lysine.. Its pathway is protein degradation; proteasomal Pup-dependent pathway. The protein operates within protein modification; protein pupylation. Functionally, catalyzes the covalent attachment of the prokaryotic ubiquitin-like protein modifier Pup to the proteasomal substrate proteins, thereby targeting them for proteasomal degradation. This tagging system is termed pupylation. The ligation reaction involves the side-chain carboxylate of the C-terminal glutamate of Pup and the side-chain amino group of a substrate lysine. The sequence is that of Pup--protein ligase from Kribbella flavida (strain DSM 17836 / JCM 10339 / NBRC 14399).